A 215-amino-acid chain; its full sequence is Ribosomal RNA small subunit methyltransferase G (215 aa).

Residues Gly-78, Leu-83, 128 to 129 (AE), and Arg-146 contribute to the S-adenosyl-L-methionine site.

It belongs to the methyltransferase superfamily. RNA methyltransferase RsmG family.

The protein localises to the cytoplasm. It carries out the reaction guanosine(527) in 16S rRNA + S-adenosyl-L-methionine = N(7)-methylguanosine(527) in 16S rRNA + S-adenosyl-L-homocysteine. Functionally, specifically methylates the N7 position of guanine in position 527 of 16S rRNA. In Anaeromyxobacter sp. (strain Fw109-5), this protein is Ribosomal RNA small subunit methyltransferase G.